A 1487-amino-acid chain; its full sequence is Probable lysine-specific demethylase SE14 (1487 aa).

The disordered stretch occupies residues 1-23 (MPPQPPPAASASASAPDPAVPAW). Residues 9–22 (ASASASAPDPAVPA) show a composition bias toward low complexity. The JmjN domain occupies 30–71 (APEYRPTESEFADPIAFLSRVEREAAAYGICKVIPPHPRPSR). Residues 86 to 104 (CDAPAPSPAAASDSSIPPS) are compositionally biased toward low complexity. Residues 86 to 113 (CDAPAPSPAAASDSSIPPSSSSPPPVSA) form a disordered region. Positions 232-398 (NSPWNLQAIA…FAKEAAVRRA (167 aa)) constitute a JmjC domain. 3 residues coordinate Fe cation: His275, Glu277, and His366. Disordered regions lie at residues 494-555 (SCSK…DDGD) and 684-718 (YGDT…PDVE). Composition is skewed to basic and acidic residues over residues 498–507 (APEKKGEDGP) and 542–551 (QAPEGEKLDT). A C2H2-type 1; degenerate zinc finger spans residues 1377-1400 (FQCDIEFCDMTFETKAELRAHQRN). 3 C2H2-type zinc fingers span residues 1400-1424 (NICT…QCVH), 1430-1454 (FKCP…IRVH), and 1460-1486 (YKCS…KFNH).

It depends on Fe(2+) as a cofactor.

It localises to the nucleus. In terms of biological role, histone demethylase that demethylates 'Lys-4' (H3K4me) of histone H3. Involved in the control of flowering time. Has a suppressive effect on floral transition under long day conditions through the demethylation of H3K4me3 in the promoter region of the flower-promoting signal HD3B/RFT1. This Oryza sativa subsp. japonica (Rice) protein is Probable lysine-specific demethylase SE14 (SE14).